The following is a 125-amino-acid chain: NADPH-dependent 7-cyano-7-deazaguanine reductase (125 aa).

C41 acts as the Thioimide intermediate in catalysis. D48 acts as the Proton donor in catalysis. Substrate contacts are provided by residues 63–65 (IEL) and 82–83 (HE).

Belongs to the GTP cyclohydrolase I family. QueF type 1 subfamily.

It is found in the cytoplasm. The catalysed reaction is 7-aminomethyl-7-carbaguanine + 2 NADP(+) = 7-cyano-7-deazaguanine + 2 NADPH + 3 H(+). Its pathway is tRNA modification; tRNA-queuosine biosynthesis. In terms of biological role, catalyzes the NADPH-dependent reduction of 7-cyano-7-deazaguanine (preQ0) to 7-aminomethyl-7-deazaguanine (preQ1). This Sulfurovum sp. (strain NBC37-1) protein is NADPH-dependent 7-cyano-7-deazaguanine reductase.